The following is a 504-amino-acid chain: Alpha-L-arabinofuranosidase C (504 aa).

Residues Asn81, Asn152, Asn269, and Asn329 are each glycosylated (N-linked (GlcNAc...) asparagine).

This sequence belongs to the glycosyl hydrolase 51 family.

It localises to the secreted. It catalyses the reaction Hydrolysis of terminal non-reducing alpha-L-arabinofuranoside residues in alpha-L-arabinosides.. It participates in glycan metabolism; L-arabinan degradation. Its function is as follows. Alpha-L-arabinofuranosidase involved in the degradation of arabinoxylan, a major component of plant hemicellulose. Acts only on small linear 1,5-alpha-linked L-arabinofuranosyl oligosaccharides. This is Alpha-L-arabinofuranosidase C (abfC) from Emericella nidulans (strain FGSC A4 / ATCC 38163 / CBS 112.46 / NRRL 194 / M139) (Aspergillus nidulans).